A 376-amino-acid polypeptide reads, in one-letter code: 3-dehydroquinate synthase (376 aa).

NAD(+) contacts are provided by residues 115 to 119, 139 to 140, Lys152, and Lys161; these read GVIGD and TS. Positions 194, 256, and 275 each coordinate Zn(2+).

The protein belongs to the sugar phosphate cyclases superfamily. Dehydroquinate synthase family. Co(2+) is required as a cofactor. Requires Zn(2+) as cofactor. NAD(+) serves as cofactor.

It localises to the cytoplasm. The enzyme catalyses 7-phospho-2-dehydro-3-deoxy-D-arabino-heptonate = 3-dehydroquinate + phosphate. It participates in metabolic intermediate biosynthesis; chorismate biosynthesis; chorismate from D-erythrose 4-phosphate and phosphoenolpyruvate: step 2/7. Functionally, catalyzes the conversion of 3-deoxy-D-arabino-heptulosonate 7-phosphate (DAHP) to dehydroquinate (DHQ). This is 3-dehydroquinate synthase from Rhizobium etli (strain CIAT 652).